Here is a 345-residue protein sequence, read N- to C-terminus: Protein-glutamate methylesterase/protein-glutamine glutaminase (345 aa).

Residues 5–123 (KVIVVDDSVL…ELSKMKDDLI (119 aa)) enclose the Response regulatory domain. A 4-aspartylphosphate modification is found at D56. The CheB-type methylesterase domain maps to 153–343 (SSDSIEAVVI…DEIIKIVRGL (191 aa)). Active-site residues include S165, H192, and D285.

The protein belongs to the CheB family. Post-translationally, phosphorylated by CheA. Phosphorylation of the N-terminal regulatory domain activates the methylesterase activity.

It localises to the cytoplasm. The catalysed reaction is [protein]-L-glutamate 5-O-methyl ester + H2O = L-glutamyl-[protein] + methanol + H(+). The enzyme catalyses L-glutaminyl-[protein] + H2O = L-glutamyl-[protein] + NH4(+). Its function is as follows. Involved in chemotaxis. Part of a chemotaxis signal transduction system that modulates chemotaxis in response to various stimuli. Catalyzes the demethylation of specific methylglutamate residues introduced into the chemoreceptors (methyl-accepting chemotaxis proteins or MCP) by CheR. Also mediates the irreversible deamidation of specific glutamine residues to glutamic acid. This Clostridium acetobutylicum (strain ATCC 824 / DSM 792 / JCM 1419 / IAM 19013 / LMG 5710 / NBRC 13948 / NRRL B-527 / VKM B-1787 / 2291 / W) protein is Protein-glutamate methylesterase/protein-glutamine glutaminase.